A 72-amino-acid chain; its full sequence is MDMKLLAAGIAVLAGIGAGIGIGIATAGAIEATARQPEASDKIQSLFIMGAGLSEATAIYGLVISIILLFVV.

The next 2 helical transmembrane spans lie at 5–25 and 52–72; these read LLAAGIAVLAGIGAGIGIGIA and GLSEATAIYGLVISIILLFVV.

The protein belongs to the ATPase C chain family. In terms of assembly, F-type ATPases have 2 components, F(1) - the catalytic core - and F(0) - the membrane proton channel. F(1) has five subunits: alpha(3), beta(3), gamma(1), delta(1), epsilon(1). F(0) has three main subunits: a(1), b(2) and c(10-14). The alpha and beta chains form an alternating ring which encloses part of the gamma chain. F(1) is attached to F(0) by a central stalk formed by the gamma and epsilon chains, while a peripheral stalk is formed by the delta and b chains.

The protein localises to the cell membrane. F(1)F(0) ATP synthase produces ATP from ADP in the presence of a proton or sodium gradient. F-type ATPases consist of two structural domains, F(1) containing the extramembraneous catalytic core and F(0) containing the membrane proton channel, linked together by a central stalk and a peripheral stalk. During catalysis, ATP synthesis in the catalytic domain of F(1) is coupled via a rotary mechanism of the central stalk subunits to proton translocation. Its function is as follows. Key component of the F(0) channel; it plays a direct role in translocation across the membrane. A homomeric c-ring of between 10-14 subunits forms the central stalk rotor element with the F(1) delta and epsilon subunits. This is ATP synthase subunit c from Clostridium perfringens (strain SM101 / Type A).